A 576-amino-acid chain; its full sequence is TRAF-type zinc finger domain-containing protein 1 (576 aa).

N-acetylalanine is present on Ala-2. The TRAF-type zinc-finger motif lies at 27-103 (IHEIHCQRNI…DLELSVVKLK (77 aa)). Phosphoserine is present on residues Ser-278, Ser-320, Ser-326, Ser-327, Ser-409, Ser-415, Ser-430, and Ser-450. A disordered region spans residues 402 to 432 (EGIPTQDSQPEDRSPELSRRRVKHQGDLSSG). Residues 411–420 (PEDRSPELSR) are compositionally biased toward basic and acidic residues. 2 disordered regions span residues 465–491 (LNSS…GSQD) and 529–576 (HGSP…EEEE). Phosphoserine is present on Ser-531. Positions 540 to 552 (GSRSSRVTPTAAS) are enriched in polar residues.

In terms of assembly, interacts with MAVS, TICAM1, TRAF1, TRAF2, TRAF3 and TRAF6. In terms of tissue distribution, expressed in vascular smooth muscle cells.

Its function is as follows. Negative feedback regulator that controls excessive innate immune responses. Regulates both Toll-like receptor 4 (TLR4) and DDX58/RIG1-like helicases (RLH) pathways. May inhibit the LTR pathway by direct interaction with TRAF6 and attenuation of NF-kappa-B activation. May negatively regulate the RLH pathway downstream from MAVS and upstream of NF-kappa-B and IRF3. The polypeptide is TRAF-type zinc finger domain-containing protein 1 (Trafd1) (Rattus norvegicus (Rat)).